The primary structure comprises 55 residues: Methylmalonyl-CoA decarboxylase subunit epsilon (55 aa).

In terms of assembly, the methylmalonyl-CoA decarboxylase is composed of five subunits: the carboxyltransferase alpha subunit (MmdA), the tunnel beta subunit (MmdB), the biotin-containing gamma subunit (MmdC), and the delta (MmdD) and epsilon (MmdE) subunits.

It is found in the cell membrane. The enzyme catalyses (S)-methylmalonyl-CoA + Na(+)(in) + H(+)(out) = propanoyl-CoA + Na(+)(out) + CO2. With respect to regulation, completely inhibited by avidin. Functionally, subunit of the sodium ion pump methylmalonyl-CoA decarboxylase, which converts the chemical energy of a decarboxylation reaction into an electrochemical gradient of Na(+) ions across the cytoplasmic membrane, thereby creating a sodium ion motive force that is used for ATP synthesis. The epsilon subunit seems not important for the catalysis of either decarboxylation or Na(+) transport, but it improves binding of the alpha subunit and plays an important role in stabilizing the methylmalonyl-CoA-decarboxylase enzyme complex. Can also convert malonyl-CoA into acetyl-CoA. This Veillonella parvula (Staphylococcus parvulus) protein is Methylmalonyl-CoA decarboxylase subunit epsilon.